The sequence spans 127 residues: Small ribosomal subunit protein eS8 (127 aa).

A disordered region spans residues Met1–Glu31.

This sequence belongs to the eukaryotic ribosomal protein eS8 family. As to quaternary structure, part of the 30S ribosomal subunit.

The polypeptide is Small ribosomal subunit protein eS8 (rps8e) (Thermoplasma acidophilum (strain ATCC 25905 / DSM 1728 / JCM 9062 / NBRC 15155 / AMRC-C165)).